Consider the following 310-residue polypeptide: UDP-N-acetylenolpyruvoylglucosamine reductase (310 aa).

Positions 31–216 constitute an FAD-binding PCMH-type domain; sequence KIGGPADYFV…LRKIEELNQA (186 aa). Arginine 180 is a catalytic residue. Serine 230 acts as the Proton donor in catalysis. The active site involves glutamate 300.

It belongs to the MurB family. It depends on FAD as a cofactor.

The protein resides in the cytoplasm. It carries out the reaction UDP-N-acetyl-alpha-D-muramate + NADP(+) = UDP-N-acetyl-3-O-(1-carboxyvinyl)-alpha-D-glucosamine + NADPH + H(+). The protein operates within cell wall biogenesis; peptidoglycan biosynthesis. Cell wall formation. This chain is UDP-N-acetylenolpyruvoylglucosamine reductase, found in Lachnoclostridium phytofermentans (strain ATCC 700394 / DSM 18823 / ISDg) (Clostridium phytofermentans).